Reading from the N-terminus, the 228-residue chain is L-ribulose-5-phosphate 4-epimerase UlaF (228 aa).

Substrate-binding positions include 26-27 (GN), 43-44 (SG), and 72-73 (SS). Positions 74, 93, and 95 each coordinate Zn(2+). D118 (proton donor/acceptor) is an active-site residue. H167 contacts Zn(2+). Y225 acts as the Proton donor/acceptor in catalysis.

The protein belongs to the aldolase class II family. AraD/FucA subfamily. Zn(2+) is required as a cofactor.

The enzyme catalyses L-ribulose 5-phosphate = D-xylulose 5-phosphate. It functions in the pathway cofactor degradation; L-ascorbate degradation; D-xylulose 5-phosphate from L-ascorbate: step 4/4. Functionally, catalyzes the isomerization of L-ribulose 5-phosphate to D-xylulose 5-phosphate. Is involved in the anaerobic L-ascorbate utilization. In Escherichia coli (strain SMS-3-5 / SECEC), this protein is L-ribulose-5-phosphate 4-epimerase UlaF.